A 490-amino-acid chain; its full sequence is Protein OrfX3 (490 aa).

This sequence belongs to the TULIP P47 family. Part of a crude toxin extract that includes BoNTA2/NTNH, P47, OrfX2 and OrfX3; OrfX1 was not detected. In terms of processing, shorter forms of this protein are seen in vivo.

Its function is as follows. Part of a botulinum neurotoxin type A2 (BoNT) locus; may be part of a progenitor toxin complex required to protect BoNT during its passage through the host gastrointestinal tract. This Clostridium botulinum (strain Kyoto / Type A2) protein is Protein OrfX3 (orfX3).